A 214-amino-acid polypeptide reads, in one-letter code: Holliday junction branch migration complex subunit RuvA (214 aa).

The segment at 1 to 63 (MISFLRGPVA…EDSMTLYGFA (63 aa)) is domain I. The segment at 64–139 (DPDEREVFEI…KLVPHGTVNG (76 aa)) is domain II. The flexible linker stretch occupies residues 139-143 (GAPAS). Positions 144 to 214 (PSAQWKPQVV…SAGRQVTARG (71 aa)) are domain III.

This sequence belongs to the RuvA family. Homotetramer. Forms an RuvA(8)-RuvB(12)-Holliday junction (HJ) complex. HJ DNA is sandwiched between 2 RuvA tetramers; dsDNA enters through RuvA and exits via RuvB. An RuvB hexamer assembles on each DNA strand where it exits the tetramer. Each RuvB hexamer is contacted by two RuvA subunits (via domain III) on 2 adjacent RuvB subunits; this complex drives branch migration. In the full resolvosome a probable DNA-RuvA(4)-RuvB(12)-RuvC(2) complex forms which resolves the HJ.

Its subcellular location is the cytoplasm. Functionally, the RuvA-RuvB-RuvC complex processes Holliday junction (HJ) DNA during genetic recombination and DNA repair, while the RuvA-RuvB complex plays an important role in the rescue of blocked DNA replication forks via replication fork reversal (RFR). RuvA specifically binds to HJ cruciform DNA, conferring on it an open structure. The RuvB hexamer acts as an ATP-dependent pump, pulling dsDNA into and through the RuvAB complex. HJ branch migration allows RuvC to scan DNA until it finds its consensus sequence, where it cleaves and resolves the cruciform DNA. The polypeptide is Holliday junction branch migration complex subunit RuvA (Renibacterium salmoninarum (strain ATCC 33209 / DSM 20767 / JCM 11484 / NBRC 15589 / NCIMB 2235)).